Here is a 432-residue protein sequence, read N- to C-terminus: MGKNVVVLGTQWGDEGKGKVVDLLTERAKYVVRYQGGHNAGHTLVINGEKTVLHLIPSGILRENVISIIGNGVVLAPDALMKEMTELEARGVPVRERLLLSEACPLILPYHVALDNAREKARGAKAIGTTGRGIGPAYEDKVARRGLRVSDLFNKETFAIKLKEIVEYHNFQLVHYYKEAAVDYQKVLDDVLAIADILTAMVVDVSELLDNARKQGELIMFEGAQGTLLDIDHGTYPYVTSSNTTAGGVATGSGLGPRYVDYVLGIVKAYSTRVGAGPFPTELNDETGEFLRKQGNEYGATTGRSRRTGWLDIVAVRRAVQINSLSGFCMTKLDVLDGLKEVKLCIGYRMPDGREVDTTPLAAEGWEGIEPIYETMPGWSETTFGVKEHSKLPQAALNYIQRVEELTGVPIDIISTGPDRDETMILRDPFDA.

Residues 13-19 (GDEGKGK) and 41-43 (GHT) contribute to the GTP site. Asp14 acts as the Proton acceptor in catalysis. The Mg(2+) site is built by Asp14 and Gly41. IMP is bound by residues 14 to 17 (DEGK), 39 to 42 (NAGH), Thr130, Arg144, Gln225, Thr240, and Arg304. His42 acts as the Proton donor in catalysis. 300–306 (ATTGRSR) is a binding site for substrate. GTP contacts are provided by residues Arg306, 332–334 (KLD), and 415–417 (STG).

This sequence belongs to the adenylosuccinate synthetase family. As to quaternary structure, homodimer. The cofactor is Mg(2+).

The protein resides in the cytoplasm. It carries out the reaction IMP + L-aspartate + GTP = N(6)-(1,2-dicarboxyethyl)-AMP + GDP + phosphate + 2 H(+). Its pathway is purine metabolism; AMP biosynthesis via de novo pathway; AMP from IMP: step 1/2. Functionally, plays an important role in the de novo pathway of purine nucleotide biosynthesis. Catalyzes the first committed step in the biosynthesis of AMP from IMP. In Yersinia pseudotuberculosis serotype O:1b (strain IP 31758), this protein is Adenylosuccinate synthetase.